The following is a 234-amino-acid chain: Phosphatidylcholine synthase (234 aa).

The Cytoplasmic portion of the chain corresponds to 1–3 (MKN). Residues 4–24 (INLILAWLVHIFTASGLIVGL) traverse the membrane as a helical segment. Over 25–26 (YS) the chain is Periplasmic. A helical membrane pass occupies residues 27–47 (IISIVNGNYSLLLKLTVIGLI). The Cytoplasmic portion of the chain corresponds to 48–75 (IDGIDGTMARKLKVKELIPEIDGTLLDN). A helical membrane pass occupies residues 76–96 (ITDYINYTFIPVIFFYLGEFI). The Periplasmic portion of the chain corresponds to 97–98 (EE). Residues 99–116 (KYKVAICIGILLSSAYQF) form a helical membrane-spanning segment. Residues 117 to 126 (SRTDAKTNDN) lie on the Cytoplasmic side of the membrane. Residues 127–147 (YFRGFPSLWNLFVILNIIFKM) form a helical membrane-spanning segment. The Periplasmic segment spans residues 148 to 149 (EQ). Residues 150–170 (ITNLITMSICIITSFIPIKFI) traverse the membrane as a helical segment. Residues 171-180 (YPSKTKELRK) are Cytoplasmic-facing. A helical transmembrane segment spans residues 181-201 (ITIPITIISCLIFVVSIFSEL). The Periplasmic segment spans residues 202–207 (STTALK). A helical membrane pass occupies residues 208 to 228 (MAKTVLILYFAYLTLASIYLT). Residues 229-234 (YKTRNR) lie on the Cytoplasmic side of the membrane.

It belongs to the CDP-alcohol phosphatidyltransferase class-I family. The cofactor is Mn(2+).

It is found in the cell inner membrane. The enzyme catalyses a CDP-1,2-diacyl-sn-glycerol + choline = a 1,2-diacyl-sn-glycero-3-phosphocholine + CMP + H(+). Functionally, condenses choline with CDP-diglyceride to produce phosphatidylcholine and CMP. The polypeptide is Phosphatidylcholine synthase (Borreliella burgdorferi (strain ATCC 35210 / DSM 4680 / CIP 102532 / B31) (Borrelia burgdorferi)).